Here is a 405-residue protein sequence, read N- to C-terminus: Phosphopentomutase (405 aa).

Mn(2+) is bound by residues D10, D303, H308, D344, H345, and H356.

This sequence belongs to the phosphopentomutase family. Mn(2+) serves as cofactor.

The protein resides in the cytoplasm. The enzyme catalyses 2-deoxy-alpha-D-ribose 1-phosphate = 2-deoxy-D-ribose 5-phosphate. It carries out the reaction alpha-D-ribose 1-phosphate = D-ribose 5-phosphate. It participates in carbohydrate degradation; 2-deoxy-D-ribose 1-phosphate degradation; D-glyceraldehyde 3-phosphate and acetaldehyde from 2-deoxy-alpha-D-ribose 1-phosphate: step 1/2. Functionally, isomerase that catalyzes the conversion of deoxy-ribose 1-phosphate (dRib-1-P) and ribose 1-phosphate (Rib-1-P) to deoxy-ribose 5-phosphate (dRib-5-P) and ribose 5-phosphate (Rib-5-P), respectively. This is Phosphopentomutase from Shewanella pealeana (strain ATCC 700345 / ANG-SQ1).